The chain runs to 467 residues: UDP-N-acetylmuramate--L-alanine ligase (467 aa).

Residue 123-129 (GTHGKST) participates in ATP binding.

This sequence belongs to the MurCDEF family.

The protein localises to the cytoplasm. It carries out the reaction UDP-N-acetyl-alpha-D-muramate + L-alanine + ATP = UDP-N-acetyl-alpha-D-muramoyl-L-alanine + ADP + phosphate + H(+). It participates in cell wall biogenesis; peptidoglycan biosynthesis. In terms of biological role, cell wall formation. The sequence is that of UDP-N-acetylmuramate--L-alanine ligase from Arthrobacter sp. (strain FB24).